A 195-amino-acid chain; its full sequence is N-(5'-phosphoribosyl)anthranilate isomerase (195 aa).

Belongs to the TrpF family.

It carries out the reaction N-(5-phospho-beta-D-ribosyl)anthranilate = 1-(2-carboxyphenylamino)-1-deoxy-D-ribulose 5-phosphate. Its pathway is amino-acid biosynthesis; L-tryptophan biosynthesis; L-tryptophan from chorismate: step 3/5. The sequence is that of N-(5'-phosphoribosyl)anthranilate isomerase from Streptococcus gordonii (strain Challis / ATCC 35105 / BCRC 15272 / CH1 / DL1 / V288).